The primary structure comprises 483 residues: Zinc metalloproteinase/disintegrin (483 aa).

An N-terminal signal peptide occupies residues 1 to 20 (MIQVLLVTVCLAVFPYQGSS). Residues 21–190 (IILESGNVND…KASQLYLTPE (170 aa)) constitute a propeptide that is removed on maturation. One can recognise a Peptidase M12B domain in the interval 197–395 (RYVKLAIVVD…YKPQCILNAP (199 aa)). 3 cysteine pairs are disulfide-bonded: Cys308/Cys390, Cys352/Cys374, and Cys354/Cys357. Position 333 (His333) interacts with Zn(2+). Glu334 is a catalytic residue. Positions 337 and 343 each coordinate Zn(2+). A propeptide spanning residues 396 to 411 (LRTDTVSTPVSGNELL) is cleaved from the precursor. The region spanning 403-483 (TPVSGNELLE…SDDCPRWNDL (81 aa)) is the Disintegrin domain. Cystine bridges form between Cys417–Cys432, Cys419–Cys427, Cys426–Cys449, Cys440–Cys446, Cys445–Cys470, and Cys458–Cys477. The short motif at 462–464 (RGD) is the Cell attachment site element.

The protein belongs to the venom metalloproteinase (M12B) family. P-II subfamily. P-IIa sub-subfamily. In terms of assembly, monomer. It depends on Zn(2+) as a cofactor. In terms of tissue distribution, expressed by the venom gland.

The protein resides in the secreted. In terms of biological role, impairs hemostasis in the envenomed animal. Its function is as follows. Inhibits ADP- and collagen-induced human platelet aggregation with IC(50) of 123 and 135 nM, respectively. Inhibits sperm-egg binding in a concentration-dependent manner, but has no effect on the fusion of sperm-egg. The chain is Zinc metalloproteinase/disintegrin from Protobothrops jerdonii (Jerdon's pitviper).